A 724-amino-acid polypeptide reads, in one-letter code: Solute carrier organic anion transporter family member 4C1 (724 aa).

Topologically, residues 1 to 105 (MKSAKGIENL…QCLQRCNTPG (105 aa)) are cytoplasmic. A phosphoserine mark is found at serine 15, serine 16, serine 24, serine 26, and serine 28. A disordered region spans residues 30–71 (IEVSALSSDPQRENSQPQELQKPQEPQKSPEPSLPSAPPNVS). The span at 44–60 (SQPQELQKPQEPQKSPE) shows a compositional bias: low complexity. A helical transmembrane segment spans residues 106 to 126 (GFLLHYCLLAVTQGIVVNGLV). At 127 to 145 (NISISTVEKRYEMKSSLTG) the chain is on the extracellular side. Residues 146 to 166 (LISSSYDISFCLLSLFVSFFG) traverse the membrane as a helical segment. At 167 to 172 (ERGHKP) the chain is on the cytoplasmic side. The chain crosses the membrane as a helical span at residues 173–197 (RWLAFAAFMIGLGALVFSLPQFFSG). Topologically, residues 198-223 (EYKLGSLFEDTCVTTRNSTSCTSSTS) are extracellular. The chain crosses the membrane as a helical span at residues 224–254 (SLSNYLYVFILGQLLLGAGGTPLYTLGTAFL). The Cytoplasmic portion of the chain corresponds to 255 to 274 (DDSVPTHKSSLYIGTGYAMS). The chain crosses the membrane as a helical span at residues 275 to 295 (ILGPAIGYVLGGQLLTIYIDV). Residues 296–311 (AMGESTDVTEDDPRWL) lie on the Extracellular side of the membrane. A helical membrane pass occupies residues 312–336 (GAWWIGFLLSWIFAWSLIIPFSCFP). Topologically, residues 337–377 (KHLPGTAEIQAGKTSQAHQSNSNADVKFGKSIKDFPAALKN) are cytoplasmic. A helical transmembrane segment spans residues 378–399 (LMKNAVFMCLVLSTSSEALITT). At 400-419 (GFATFLPKFIENQFGLTSSF) the chain is on the extracellular side. A helical membrane pass occupies residues 420-443 (AATLGGAVLIPGAALGQILGGFLV). Over 444 to 447 (SKFR) the chain is Cytoplasmic. A helical transmembrane segment spans residues 448 to 471 (MTCKNTMKFALFTSGVALTLSFVF). Residues 472-580 (MYAKCENEPF…ETHCAKLPIF (109 aa)) are Extracellular-facing. The Kazal-like domain occupies 495-549 (GNLIAPCNANCNCSRSYYYPVCGDGVQYFSPCFAGCSNPVAHRKPKVYYNCSCIE). Intrachain disulfides connect cysteine 501/cysteine 530, cysteine 507/cysteine 526, and cysteine 516/cysteine 547. A helical transmembrane segment spans residues 581–603 (LCIFFIVIIFTFMAGTPITVSIL). At 604 to 612 (RCVNHRQRS) the chain is on the cytoplasmic side. Residues 613–638 (LALGIQFMVLRLLGTIPGPIIFGFTI) traverse the membrane as a helical segment. At 639-672 (DSTCILWDINDCGIKGACWIYDNIKMAHMLVAIS) the chain is on the extracellular side. Residues 673 to 690 (VTCKVITMFFNGFAIFLY) traverse the membrane as a helical segment. Over 691-724 (KPPPSATDVSFHKENAVVTNVLAEQDLNKIVKEG) the chain is Cytoplasmic.

It belongs to the organo anion transporter (TC 2.A.60) family. In terms of tissue distribution, predominantly expressed in kidney but also weakly expressed in both fetal liver and kidney.

It localises to the basolateral cell membrane. The catalysed reaction is estrone 3-sulfate(out) = estrone 3-sulfate(in). The enzyme catalyses L-thyroxine(out) = L-thyroxine(in). It carries out the reaction 3,3',5-triiodo-L-thyronine(out) = 3,3',5-triiodo-L-thyronine(in). It catalyses the reaction chenodeoxycholate(out) = chenodeoxycholate(in). The catalysed reaction is glycocholate(out) = glycocholate(in). The enzyme catalyses L-homoarginine(in) = L-homoarginine(out). It carries out the reaction L-arginine(in) = L-arginine(out). It catalyses the reaction N(omega),N(omega)-dimethyl-L-arginine(out) = N(omega),N(omega)-dimethyl-L-arginine(in). Mediates the transport of organic anions such as steroids (estrone 3-sulfate, chenodeoxycholate, glycocholate) and thyroid hormones (3,3',5-triiodo-L-thyronine (T3), L-thyroxine (T4)), in the kidney. Capable of transporting cAMP and pharmacological substances such as digoxin, ouabain and methotrexate. Transport is independent of sodium, chloride ion, and ATP. Transport activity is stimulated by an acidic extracellular environment due to increased substrate affinity to the transporter. The driving force for this transport activity is currently not known. The role of hydrogencarbonate (HCO3(-), bicarbonate) as the probable counteranion that exchanges for organic anions is still not well defined. Functions as an uptake transporter at the apical membrane, suggesting a role in renal reabsorption. Involved in the renal secretion of the uremic toxin ADMA (N(omega),N(omega)-dimethyl-L-arginine or asymmetrical dimethylarginine), which is associated to cardiovascular events and mortality, and the structurally related amino acids L-arginine and L-homoarginine (a cardioprotective biomarker). Can act bidirectionally, suggesting a dual protective role of this transport protein; exporting L-homoarginine after being synthesized in proximal tubule cells, and mediating uptake of ADMA from the blood into proximal tubule cells where it is degraded by the enzyme dimethylarginine dimethylaminohydrolase 1 (DDAH1). May be involved in sperm maturation by enabling directed movement of organic anions and compounds within or between cells. This ion-transporting process is important to maintain the strict epididymal homeostasis necessary for sperm maturation. May have a role in secretory functions since seminal vesicle epithelial cells are assumed to secrete proteins involved in decapacitation by modifying surface proteins to facilitate the acquisition of the ability to fertilize the egg. The protein is Solute carrier organic anion transporter family member 4C1 of Homo sapiens (Human).